The primary structure comprises 216 residues: Uracil phosphoribosyltransferase (216 aa).

Residue 30–34 (KNLVR) participates in GTP binding. 5-phospho-alpha-D-ribose 1-diphosphate contacts are provided by residues Arg80, Arg105, and 140 to 148 (DPMIATAST). Residues Ile203 and 208-210 (GDA) each bind uracil. Asp209 provides a ligand contact to 5-phospho-alpha-D-ribose 1-diphosphate.

The protein belongs to the UPRTase family. Mg(2+) serves as cofactor.

The enzyme catalyses UMP + diphosphate = 5-phospho-alpha-D-ribose 1-diphosphate + uracil. The protein operates within pyrimidine metabolism; UMP biosynthesis via salvage pathway; UMP from uracil: step 1/1. Allosterically activated by GTP. Functionally, catalyzes the conversion of uracil and 5-phospho-alpha-D-ribose 1-diphosphate (PRPP) to UMP and diphosphate. The protein is Uracil phosphoribosyltransferase of Saccharolobus islandicus (strain M.16.4 / Kamchatka #3) (Sulfolobus islandicus).